The following is a 237-amino-acid chain: Purine nucleoside phosphorylase DeoD-type (237 aa).

H5 provides a ligand contact to a purine D-ribonucleoside. Residues G21, R25, R44, and 88–91 (RVGS) contribute to the phosphate site. Residues 180–182 (EME) and 204–205 (SD) each bind a purine D-ribonucleoside. D205 (proton donor) is an active-site residue.

It belongs to the PNP/UDP phosphorylase family. As to quaternary structure, homohexamer; trimer of homodimers.

It catalyses the reaction a purine D-ribonucleoside + phosphate = a purine nucleobase + alpha-D-ribose 1-phosphate. The catalysed reaction is a purine 2'-deoxy-D-ribonucleoside + phosphate = a purine nucleobase + 2-deoxy-alpha-D-ribose 1-phosphate. Its function is as follows. Catalyzes the reversible phosphorolytic breakdown of the N-glycosidic bond in the beta-(deoxy)ribonucleoside molecules, with the formation of the corresponding free purine bases and pentose-1-phosphate. This chain is Purine nucleoside phosphorylase DeoD-type, found in Edwardsiella ictaluri (strain 93-146).